The sequence spans 464 residues: Rab GDP-dissociation inhibitor (464 aa).

Belongs to the Rab GDI family. In terms of assembly, interacts with the GDP-bound form of Rab GTPase YPT7.

Functionally, regulates the GDP/GTP exchange reaction of YPT7 by inhibiting the dissociation of GDP from it, and the subsequent binding of GTP to YTP7. This chain is Rab GDP-dissociation inhibitor (GDI1), found in Pyricularia oryzae (strain 70-15 / ATCC MYA-4617 / FGSC 8958) (Rice blast fungus).